A 440-amino-acid polypeptide reads, in one-letter code: UDP-N-acetylglucosamine 1-carboxyvinyltransferase 1 (440 aa).

22–23 (KN) provides a ligand contact to phosphoenolpyruvate. Residue R93 coordinates UDP-N-acetyl-alpha-D-glucosamine. The active-site Proton donor is C117. C117 is modified (2-(S-cysteinyl)pyruvic acid O-phosphothioketal). Residues 122 to 126 (RPIDQ), D306, and V328 contribute to the UDP-N-acetyl-alpha-D-glucosamine site.

This sequence belongs to the EPSP synthase family. MurA subfamily.

Its subcellular location is the cytoplasm. It carries out the reaction phosphoenolpyruvate + UDP-N-acetyl-alpha-D-glucosamine = UDP-N-acetyl-3-O-(1-carboxyvinyl)-alpha-D-glucosamine + phosphate. The protein operates within cell wall biogenesis; peptidoglycan biosynthesis. Its function is as follows. Cell wall formation. Adds enolpyruvyl to UDP-N-acetylglucosamine. The polypeptide is UDP-N-acetylglucosamine 1-carboxyvinyltransferase 1 (Halalkalibacterium halodurans (strain ATCC BAA-125 / DSM 18197 / FERM 7344 / JCM 9153 / C-125) (Bacillus halodurans)).